The chain runs to 240 residues: Phosducin-like protein 2 (240 aa).

The region spanning 54 to 214 (QRDKKIDDMS…MLGQAGAVPT (161 aa)) is the Phosducin domain. Phosphoserine is present on residues Ser-63 and Ser-73. The thioredoxin fold stretch occupies residues 99–240 (FGSVREISGQ…DLEDKSSDFY (142 aa)).

The protein belongs to the phosducin family.

The protein localises to the cytoplasm. Its function is as follows. Modulates the activation of caspases during apoptosis. This Drosophila melanogaster (Fruit fly) protein is Phosducin-like protein 2.